The following is a 692-amino-acid chain: Follicle-stimulating hormone receptor (692 aa).

An N-terminal signal peptide occupies residues 1 to 17; it reads MALLLVSLLAFLGTGSG. Cystine bridges form between Cys18–Cys25 and Cys23–Cys32. An LRRNT domain is found at 18-46; sequence CHHWLCHCSNRVFLCQDSKVTEIPTDLPR. At 18-365 the chain is on the extracellular side; that stretch reads CHHWLCHCSN…EDIMGYNILR (348 aa). LRR repeat units follow at residues 49-72, 73-97, 98-118, 119-143, 144-169, 170-192, 193-216, 217-240, and 241-259; these read IELR…FGDL, EKIE…LPKL, HEIR…AFQN, LPSL…KIQS, LQKV…MGLS, FESV…AFNG, TQLD…VFQG, ASGP…GLEN, and LKKL…PNLD. N-linked (GlcNAc...) asparagine glycosylation is found at Asn191 and Asn199. Disulfide bonds link Cys275/Cys345, Cys276/Cys292, Cys276/Cys355, and Cys292/Cys337. Asn293 carries an N-linked (GlcNAc...) asparagine glycan. Tyr334 carries the post-translational modification Sulfotyrosine. Residues 366–386 traverse the membrane as a helical segment; the sequence is VLIWFISILAITGNTTVLVVL. The Cytoplasmic segment spans residues 387-397; that stretch reads TTSQYKLTVPR. A helical transmembrane segment spans residues 398–420; that stretch reads FLMCNLAFADLCIGIYLLLIASV. At 421–442 the chain is on the extracellular side; it reads DIHTKSQYHNYAIDWQTGAGCD. Cys441 and Cys516 form a disulfide bridge. Residues 443 to 464 traverse the membrane as a helical segment; the sequence is AAGFFTVFASELSVYTLTAITL. Topologically, residues 465-484 are cytoplasmic; sequence ERWHTITHAMQLECKVQLRH. Residues 485-507 traverse the membrane as a helical segment; that stretch reads AASVMVLGWTFAFAAALFPIFGI. Residues 508–527 are Extracellular-facing; it reads SSYMKVSICLPMDIDSPLSQ. Residues 528-549 traverse the membrane as a helical segment; that stretch reads LYVMALLVLNVLAFVVICGCYT. Residues 550–572 lie on the Cytoplasmic side of the membrane; it reads HIYLTVRNPTIVSSSSDTKIAKR. The chain crosses the membrane as a helical span at residues 573-596; sequence MATLIFTDFLCMAPISFFAISASL. The Extracellular segment spans residues 597–607; it reads KVPLITVSKAK. The chain crosses the membrane as a helical span at residues 608 to 629; it reads ILLVLFYPINSCANPFLYAIFT. At 630 to 692 the chain is on the cytoplasmic side; sequence KNFRRDFFIL…LVPLNHSSQN (63 aa).

The protein belongs to the G-protein coupled receptor 1 family. FSH/LSH/TSH subfamily. As to quaternary structure, homotrimer. Functions as a homotrimer binding the FSH hormone heterodimer composed of CGA and FSHB. Interacts with ARRB2. Interacts with APPL2; interaction is independent of follicle stimulating hormone stimulation. N-glycosylated; indirectly required for FSH-binding, possibly via a conformational change that allows high affinity binding of hormone. In terms of processing, sulfated. As to expression, sertoli cells and ovarian granulosa cells.

It localises to the cell membrane. G protein-coupled receptor for follitropin, the follicle-stimulating hormone. Through cAMP production activates the downstream PI3K-AKT and ERK1/ERK2 signaling pathways. In Rattus norvegicus (Rat), this protein is Follicle-stimulating hormone receptor (Fshr).